The chain runs to 279 residues: NADPH-dependent 7-cyano-7-deazaguanine reductase (279 aa).

86–88 (IES) is a substrate binding site. 88–89 (SK) is an NADPH binding site. Cys187 acts as the Thioimide intermediate in catalysis. The Proton donor role is filled by Asp194. 226–227 (HE) is a binding site for substrate. 255-256 (RG) is an NADPH binding site.

It belongs to the GTP cyclohydrolase I family. QueF type 2 subfamily. As to quaternary structure, homodimer.

It localises to the cytoplasm. It catalyses the reaction 7-aminomethyl-7-carbaguanine + 2 NADP(+) = 7-cyano-7-deazaguanine + 2 NADPH + 3 H(+). It participates in tRNA modification; tRNA-queuosine biosynthesis. Catalyzes the NADPH-dependent reduction of 7-cyano-7-deazaguanine (preQ0) to 7-aminomethyl-7-deazaguanine (preQ1). This is NADPH-dependent 7-cyano-7-deazaguanine reductase from Actinobacillus pleuropneumoniae serotype 7 (strain AP76).